Reading from the N-terminus, the 184-residue chain is uncharacterized protein (184 aa).

A helical membrane pass occupies residues 5-27; it reads YLLATAMFLIVCVYVISETVNLH.

It localises to the membrane. This is an uncharacterized protein from Methanocaldococcus jannaschii (strain ATCC 43067 / DSM 2661 / JAL-1 / JCM 10045 / NBRC 100440) (Methanococcus jannaschii).